The primary structure comprises 2249 residues: Outer membrane protein A (2249 aa).

Residues 1–28 form the signal peptide; the sequence is MANISPKLFKKAIQQGLKAALFTTSTAA. The stretch at 212-286 is one Type I 1 repeat; it reads IGNTNALATV…NGALSQVTGD (75 aa). Positions 212-1180 are 14 X approximate tandem repeats; it reads IGNTNALATV…ALATVNVGAG (969 aa). Type II repeat units lie at residues 287 to 358 and 359 to 430; these read IGNT…VTGN and VGNT…VTGD. The stretch at 431 to 505 is one Type I 2 repeat; that stretch reads IGNTNALATV…NGALSQVTGN (75 aa). A Type II 3 repeat occupies 506-577; the sequence is IGNTNSLATI…FTGNSTVTGD (72 aa). One copy of the Type I 3 repeat lies at 578–652; that stretch reads IGNTNSLATI…NGALSQVTGD (75 aa). A Type II 4 repeat occupies 653 to 724; sequence IGNTNSLATI…FTGNSTVTGD (72 aa). Type I repeat units lie at residues 725 to 799, 800 to 874, and 875 to 949; these read IGNT…VTGD. Type II repeat units follow at residues 950 to 1021, 1022 to 1093, and 1094 to 1165; these read IGNT…VTGN, VGNT…VTGN, and VGNT…VTGD. The stretch at 1166-1180 is one Type I 7; truncated repeat; that stretch reads IGNTNALATVNVGAG. Positions 1962 to 2249 constitute an Autotransporter domain; that stretch reads DMDAKFGAWI…QGSVKVRVNF (288 aa).

This sequence belongs to the rickettsiae OmpA/OmpB family. Post-translationally, glycosylated.

The protein localises to the periplasm. It is found in the secreted. Its subcellular location is the cell surface. It localises to the cell outer membrane. Functionally, elicits protective immunity. The chain is Outer membrane protein A (ompA) from Rickettsia rickettsii.